A 269-amino-acid chain; its full sequence is Ribosomal RNA small subunit methyltransferase A (269 aa).

6 residues coordinate S-adenosyl-L-methionine: asparagine 11, leucine 13, glycine 37, glutamate 57, aspartate 85, and asparagine 104.

The protein belongs to the class I-like SAM-binding methyltransferase superfamily. rRNA adenine N(6)-methyltransferase family. RsmA subfamily.

It is found in the cytoplasm. The catalysed reaction is adenosine(1518)/adenosine(1519) in 16S rRNA + 4 S-adenosyl-L-methionine = N(6)-dimethyladenosine(1518)/N(6)-dimethyladenosine(1519) in 16S rRNA + 4 S-adenosyl-L-homocysteine + 4 H(+). Functionally, specifically dimethylates two adjacent adenosines (A1518 and A1519) in the loop of a conserved hairpin near the 3'-end of 16S rRNA in the 30S particle. May play a critical role in biogenesis of 30S subunits. This Campylobacter hominis (strain ATCC BAA-381 / DSM 21671 / CCUG 45161 / LMG 19568 / NCTC 13146 / CH001A) protein is Ribosomal RNA small subunit methyltransferase A.